Here is a 224-residue protein sequence, read N- to C-terminus: Synaptogyrin-2 (224 aa).

An N-acetylmethionine modification is found at Met1. At Ser3 the chain carries Phosphoserine. Residues 20–171 (FLKQPQVVVR…LAFLAYQRYK (152 aa)) form the MARVEL domain. 4 consecutive transmembrane segments (helical) span residues 26–46 (VVVR…IFGE), 73–93 (AIGV…IYFP), 105–125 (VIGD…GFCF), and 147–167 (AAIT…FLAY). Residues 196–224 (PGVPADTYQQPPFTQNAESTEGYQPPPVY) are disordered. The segment covering 202-217 (TYQQPPFTQNAESTEG) has biased composition (polar residues).

Belongs to the synaptogyrin family. Post-translationally, may be tyrosine phosphorylated by Src.

It is found in the cytoplasmic vesicle membrane. It localises to the cytoplasmic vesicle. Its subcellular location is the secretory vesicle. The protein resides in the synaptic vesicle membrane. Functionally, may play a role in regulated exocytosis. In neuronal cells, modulates the localization of synaptophysin/SYP into synaptic-like microvesicles and may therefore play a role in the formation and/or the maturation of this vesicles. May also play a role in GLUT4 storage and transport to the plasma membrane. This chain is Synaptogyrin-2, found in Bos taurus (Bovine).